We begin with the raw amino-acid sequence, 290 residues long: Diaminopimelate epimerase (290 aa).

N14 and N67 together coordinate substrate. The Proton donor role is filled by C76. Substrate is bound by residues 77–78 (GN), N166, N199, and 217–218 (ER). The active-site Proton acceptor is C226. 227–228 (GT) lines the substrate pocket.

Belongs to the diaminopimelate epimerase family. In terms of assembly, homodimer.

It is found in the cytoplasm. It catalyses the reaction (2S,6S)-2,6-diaminopimelate = meso-2,6-diaminopimelate. It functions in the pathway amino-acid biosynthesis; L-lysine biosynthesis via DAP pathway; DL-2,6-diaminopimelate from LL-2,6-diaminopimelate: step 1/1. Catalyzes the stereoinversion of LL-2,6-diaminopimelate (L,L-DAP) to meso-diaminopimelate (meso-DAP), a precursor of L-lysine and an essential component of the bacterial peptidoglycan. The protein is Diaminopimelate epimerase of Geobacillus kaustophilus (strain HTA426).